The primary structure comprises 1038 residues: MGSRRPRLPGFGEDCEPRGGGRGGGGRGRGSYYPQAQQYHPQGHGGRGGAGYYHGAAPQPRGAMVVQQWRPATAAAEHLGHQQPYNSSVRPQHYYGPSAIAPELLQAMDAPHEPPANVSSPEAASPEASSPRSLALEVTEQLQDLSVQYQLSESQEEIVQHVPVSTKSFKFPHRPGSGSIGTRCLVKANHFFAQLPDKDLHQYDVSITPELTSRIRSRAVMEELVRLHKMSYLGGRLPAYDGRKSLYTAGPLPFTSKEFRISLLEEDDGSGSERRQKTYNVVIKFAARADLHRLEQFLAGRQAEAPQEALQVLDIVLRELPTARYAPFGRSFFSPDLGRRRSLGEGLETWRGFYQSIRPTQMGLSLNIDMSATAFFEPLPVIDFVIQLLNTDIRSRPLSDAERVKIKKALRGVKVGVTHRGNMRRKYRISGLTSQATRELTFPVDQGGTVKSVVQYFQETYGFAIQHTYLPCLQVGNQQRPNYLPMEVCKIVEGQRYSKRLNQNQIRALLEETCQRPHDRERDIIQMVNHNSYHEDPYAKEFGIKISERLALVEARILPAPRLKYNETGREKDCLPRVGQWNMMNKKMVNGGRVRSWICVNFARNVQESVASGFCRELARMCQASGMDFALEPVLPSMYARPDQVERALKARFHDAMNILGPQHKELDLLIGLLPDNNGSLYGDLKRICEIDLGLVSQCCCTKQVFKMNKQILANLALKINVKVGGRNTVLVDAVSRRIPLVTDRPTIIFGADVTHPHPGEDSSPSIAAVVASQDWPEVTKYAGLVSAQSHRQELIDDLYNITHDPHRGPICGGMVRELLISFKRSTGQKPQRIIFYRDGVSEGQFYQVLLHELDAIRKACASLEANYQPQVTFIVVQKRHHTRLFAHNHNDQNSVDRSGNILPGTVVDSKICHPTEFDFFLCSHAGIKGTSRPAHYHVLWDENNFTADALQTLTNNLCYTYARCTRSVSIVPPAYYAHLAAFRARFYMESDSSDSGSMASGRGGGSSTSRSTRAAGGGAVRPLPALKDSVKNVMFYC.

Disordered regions lie at residues 1–58 and 110–134; these read MGSR…GAAP and APHE…PRSL. Composition is skewed to gly residues over residues 18–29 and 43–52; these read RGGGRGGGGRGR and GHGGRGGAGY. Low complexity predominate over residues 115-134; the sequence is PANVSSPEAASPEASSPRSL. A PAZ domain is found at 380 to 493; the sequence is PVIDFVIQLL…LPMEVCKIVE (114 aa). One can recognise a Piwi domain in the interval 669-990; it reads LLIGLLPDNN…AAFRARFYME (322 aa). Residues 992–1021 are disordered; it reads DSSDSGSMASGRGGGSSTSRSTRAAGGGAV.

It belongs to the argonaute family. Ago subfamily.

Its function is as follows. Probably involved in the RNA silencing pathway. May bind to short RNAs such as microRNAs (miRNAs) or short interfering RNAs (siRNAs), and represses the translation of mRNAs which are complementary to them. The polypeptide is Protein argonaute 1D (AGO1D) (Oryza sativa subsp. japonica (Rice)).